Here is a 438-residue protein sequence, read N- to C-terminus: sn-glycerol-3-phosphate-binding periplasmic protein UgpB (438 aa).

Residues 1-23 (MKPLRYTASALALGLALMANAQA) form the signal peptide. Sn-glycerol 3-phosphate contacts are provided by tyrosine 65, glutamate 89, serine 144, serine 270, glycine 307, tyrosine 346, and arginine 397.

This sequence belongs to the bacterial solute-binding protein 1 family. As to quaternary structure, the complex is composed of two ATP-binding proteins (UgpC), two transmembrane proteins (UgpA and UgpE) and a solute-binding protein (UgpB).

The protein localises to the periplasm. Its function is as follows. Part of the ABC transporter complex UgpBAEC involved in sn-glycerol-3-phosphate (G3P) import. Binds G3P. The protein is sn-glycerol-3-phosphate-binding periplasmic protein UgpB (ugpB) of Escherichia coli O1:K1 / APEC.